The chain runs to 1057 residues: Glycine dehydrogenase (decarboxylating), mitochondrial (1057 aa).

The N-terminal 86 residues, 1-86 (MERARRLANR…GVGYPSQSRS (86 aa)), are a transit peptide targeting the mitochondrion. Residues 18–27 (SEAKQNRKTE) show a composition bias toward basic and acidic residues. Positions 18–47 (SEAKQNRKTESTSTTTTTPLPFSLSGSSSR) are disordered. Residues 28–47 (STSTTTTTPLPFSLSGSSSR) show a composition bias toward low complexity. Lysine 792 carries the post-translational modification N6-(pyridoxal phosphate)lysine.

The protein belongs to the GcvP family. Homodimer. The glycine cleavage system is composed of four proteins: P, T, L and H. Requires pyridoxal 5'-phosphate as cofactor. Highly expressed in leaves. Detected in roots and embryos.

The protein localises to the mitochondrion. The enzyme catalyses N(6)-[(R)-lipoyl]-L-lysyl-[glycine-cleavage complex H protein] + glycine + H(+) = N(6)-[(R)-S(8)-aminomethyldihydrolipoyl]-L-lysyl-[glycine-cleavage complex H protein] + CO2. The glycine cleavage system catalyzes the degradation of glycine. The P protein binds the alpha-amino group of glycine through its pyridoxal phosphate cofactor; CO(2) is released and the remaining methylamine moiety is then transferred to the lipoamide cofactor of the H protein. The protein is Glycine dehydrogenase (decarboxylating), mitochondrial (GDCSP) of Pisum sativum (Garden pea).